The chain runs to 393 residues: Alpha-pyrone synthesis polyketide synthase-like Pks18 (393 aa).

The disordered stretch occupies residues 1-26 (MNVSAESGAPRRAGQRHEVGLAQLPP). Residue Cys-175 is the Nucleophile of the active site. A substrate-binding site is contributed by His-221.

It belongs to the thiolase-like superfamily. Chalcone/stilbene synthases family. Homodimer.

It participates in lipid metabolism; fatty acid biosynthesis. Its function is as follows. Involved in the biosynthesis of tri- and tetraketide alpha-pyrones. Pks18 catalyzes the extension of medium- and long-chain aliphatic acyl-CoA substrates by using malonyl-CoA as an extender molecule to synthesize polyketide products. The chain is Alpha-pyrone synthesis polyketide synthase-like Pks18 (pks18) from Mycobacterium bovis (strain ATCC BAA-935 / AF2122/97).